The sequence spans 59 residues: Cecropin-C type 2 (59 aa).

The N-terminal stretch at 1–23 (MNFAKVFVLVAMAVLLLVGQSEA) is a signal peptide.

Belongs to the cecropin family.

The protein localises to the secreted. Cecropins have lytic and antibacterial activity against several Gram-positive and Gram-negative bacteria. In Aedes albopictus (Asian tiger mosquito), this protein is Cecropin-C type 2 (CECC2).